Here is a 200-residue protein sequence, read N- to C-terminus: Small ribosomal subunit protein eS1 (200 aa).

This sequence belongs to the eukaryotic ribosomal protein eS1 family.

The polypeptide is Small ribosomal subunit protein eS1 (Thermococcus sibiricus (strain DSM 12597 / MM 739)).